The chain runs to 186 residues: Putative 3-methyladenine DNA glycosylase (186 aa).

The protein belongs to the DNA glycosylase MPG family.

The polypeptide is Putative 3-methyladenine DNA glycosylase (Borrelia garinii subsp. bavariensis (strain ATCC BAA-2496 / DSM 23469 / PBi) (Borreliella bavariensis)).